The following is a 262-amino-acid chain: uncharacterized protein (262 aa).

Residues 6 to 70 (LRINQFLAHY…LKNKKFSVLV (65 aa)) enclose the S4 RNA-binding domain. The active-site Nucleophile is the Asp108.

Belongs to the pseudouridine synthase RsuA family.

The enzyme catalyses a uridine in RNA = a pseudouridine in RNA. This is an uncharacterized protein from Helicobacter pylori (strain ATCC 700392 / 26695) (Campylobacter pylori).